The sequence spans 325 residues: Beta-ketoacyl-[acyl-carrier-protein] synthase III (325 aa).

Catalysis depends on residues cysteine 116 and histidine 252. The tract at residues 253 to 257 (QANLR) is ACP-binding. Asparagine 282 is a catalytic residue.

Belongs to the thiolase-like superfamily. FabH family. In terms of assembly, homodimer.

Its subcellular location is the cytoplasm. The enzyme catalyses malonyl-[ACP] + acetyl-CoA + H(+) = 3-oxobutanoyl-[ACP] + CO2 + CoA. It functions in the pathway lipid metabolism; fatty acid biosynthesis. Its function is as follows. Catalyzes the condensation reaction of fatty acid synthesis by the addition to an acyl acceptor of two carbons from malonyl-ACP. Catalyzes the first condensation reaction which initiates fatty acid synthesis and may therefore play a role in governing the total rate of fatty acid production. Possesses both acetoacetyl-ACP synthase and acetyl transacylase activities. Its substrate specificity determines the biosynthesis of branched-chain and/or straight-chain of fatty acids. This is Beta-ketoacyl-[acyl-carrier-protein] synthase III from Xanthomonas euvesicatoria pv. vesicatoria (strain 85-10) (Xanthomonas campestris pv. vesicatoria).